Consider the following 90-residue polypeptide: Succinate dehydrogenase subunit 7, mitochondrial (90 aa).

The transit peptide at 1-41 directs the protein to the mitochondrion; sequence MAQPAFLSALRSRLRSPQPQAPALPHLQPPRRGFHVELGAR.

As to quaternary structure, component of complex II composed of eight subunits in plants: four classical SDH subunits SDH1, SDH2, SDH3 and SDH4 (a flavoprotein (FP), an iron-sulfur protein (IP), and a cytochrome b composed of a large and a small subunit.), as well as four subunits unknown in mitochondria from bacteria and heterotrophic eukaryotes.

The protein localises to the mitochondrion inner membrane. It participates in carbohydrate metabolism; tricarboxylic acid cycle. The protein is Succinate dehydrogenase subunit 7, mitochondrial of Oryza sativa subsp. japonica (Rice).